A 120-amino-acid polypeptide reads, in one-letter code: Small ribosomal subunit protein uS13 (120 aa).

Residues P96–K120 form a disordered region.

It belongs to the universal ribosomal protein uS13 family. As to quaternary structure, part of the 30S ribosomal subunit. Forms a loose heterodimer with protein S19. Forms two bridges to the 50S subunit in the 70S ribosome.

Located at the top of the head of the 30S subunit, it contacts several helices of the 16S rRNA. In the 70S ribosome it contacts the 23S rRNA (bridge B1a) and protein L5 of the 50S subunit (bridge B1b), connecting the 2 subunits; these bridges are implicated in subunit movement. Contacts the tRNAs in the A and P-sites. This chain is Small ribosomal subunit protein uS13, found in Dechloromonas aromatica (strain RCB).